The primary structure comprises 345 residues: Acetylserotonin O-methyltransferase (345 aa).

S-adenosyl-L-methionine is bound by residues Y147, W164, D210, 235 to 237 (GDF), and R252. The Proton donor/acceptor role is filled by H255. Residues D256, N302, and Q306 each coordinate substrate.

It belongs to the class I-like SAM-binding methyltransferase superfamily. Cation-independent O-methyltransferase family. In terms of assembly, homodimer. In terms of tissue distribution, expressed in the pineal gland (at protein level). In the retina, very low expression is found at the mRNA level, and not at the protein level.

It catalyses the reaction N-acetylserotonin + S-adenosyl-L-methionine = melatonin + S-adenosyl-L-homocysteine + H(+). The protein operates within aromatic compound metabolism; melatonin biosynthesis; melatonin from serotonin: step 1/2. Its function is as follows. Catalyzes the transfer of a methyl group onto N-acetylserotonin, producing melatonin (N-acetyl-5-methoxytryptamine). Functionally, does not show Acetylserotonin O-methyltransferase activity. The chain is Acetylserotonin O-methyltransferase (ASMT) from Homo sapiens (Human).